The primary structure comprises 109 residues: Small ribosomal subunit protein uS17 (109 aa).

The protein belongs to the universal ribosomal protein uS17 family. As to quaternary structure, part of the 30S ribosomal subunit.

Functionally, one of the primary rRNA binding proteins, it binds specifically to the 5'-end of 16S ribosomal RNA. This Methanococcoides burtonii (strain DSM 6242 / NBRC 107633 / OCM 468 / ACE-M) protein is Small ribosomal subunit protein uS17.